We begin with the raw amino-acid sequence, 321 residues long: Glutamyl-Q tRNA(Asp) synthetase (321 aa).

L-glutamate-binding positions include 25 to 29 (RFAPS) and Glu61. The short motif at 28–38 (PSPSGDLHFGS) is the 'HIGH' region element. The Zn(2+) site is built by Cys117, Cys119, Tyr131, and Cys135. L-glutamate-binding residues include Tyr188 and Arg206. Positions 244-248 (KLSKQ) match the 'KMSKS' region motif. Position 247 (Lys247) interacts with ATP.

Belongs to the class-I aminoacyl-tRNA synthetase family. GluQ subfamily. Requires Zn(2+) as cofactor.

Catalyzes the tRNA-independent activation of glutamate in presence of ATP and the subsequent transfer of glutamate onto a tRNA(Asp). Glutamate is transferred on the 2-amino-5-(4,5-dihydroxy-2-cyclopenten-1-yl) moiety of the queuosine in the wobble position of the QUC anticodon. This Yersinia pestis protein is Glutamyl-Q tRNA(Asp) synthetase.